The primary structure comprises 348 residues: Uroporphyrinogen decarboxylase (348 aa).

Substrate-binding positions include 27-31 (RQAGR), Phe46, Asp76, Tyr152, Ser207, and His320.

Belongs to the uroporphyrinogen decarboxylase family. As to quaternary structure, homodimer.

It localises to the cytoplasm. The enzyme catalyses uroporphyrinogen III + 4 H(+) = coproporphyrinogen III + 4 CO2. Its pathway is porphyrin-containing compound metabolism; protoporphyrin-IX biosynthesis; coproporphyrinogen-III from 5-aminolevulinate: step 4/4. In terms of biological role, catalyzes the decarboxylation of four acetate groups of uroporphyrinogen-III to yield coproporphyrinogen-III. This chain is Uroporphyrinogen decarboxylase, found in Bacillus thuringiensis (strain Al Hakam).